The chain runs to 654 residues: Endoplasmic reticulum chaperone BiP (654 aa).

The N-terminal stretch at 1 to 18 is a signal peptide; sequence MKFTVVAAALLLLCAVRA. A required for interaction with ELAPOR1 region spans residues 1-80; sequence MKFTVVAAAL…EGERLIGDAA (80 aa). 36–39 provides a ligand contact to ATP; it reads GTTY. Position 86 is a phosphoserine (Ser-86). Lys-96 contacts ATP. Lys-125 carries the post-translational modification N6-acetyllysine. The segment at 125–280 is nucleotide-binding (NBD); that stretch reads KPYIQVDIGG…KKKTGKDVRK (156 aa). Tyr-160 carries the 3'-nitrotyrosine modification. Lys-213 is subject to N6-acetyllysine. Position 227–229 (227–229) interacts with ATP; it reads GGT. Position 271 is an N6-acetyllysine (Lys-271). 293 to 300 provides a ligand contact to ATP; that stretch reads EKAKRALS. Lys-326 carries the N6-acetyllysine modification. A Glycyl lysine isopeptide (Lys-Gly) (interchain with G-Cter in SUMO2) cross-link involves residue Lys-352. N6-acetyllysine; alternate is present on Lys-353. A Glycyl lysine isopeptide (Lys-Gly) (interchain with G-Cter in SUMO1); alternate cross-link involves residue Lys-353. Residue 364-367 coordinates ATP; that stretch reads GSTR. The interdomain linker stretch occupies residues 409–419; it reads QDTGDLVLLDV. The substrate-binding (SBD) stretch occupies residues 420–500; it reads CPLTLGIETV…PRGVPQIEVT (81 aa). Lys-447 is modified (N6-succinyllysine). Omega-N-methylarginine is present on Arg-492. At Thr-518 the chain carries O-AMP-threonine; alternate. The residue at position 518 (Thr-518) is a Phosphothreonine; alternate. Lys-585 carries the post-translational modification N6,N6,N6-trimethyllysine; by METTL21A; in vitro. An N6,N6-dimethyllysine; alternate modification is found at Lys-585. At Lys-585 the chain carries N6-methyllysine; alternate. An N6-methyllysine modification is found at Lys-591. The disordered stretch occupies residues 631 to 654; that stretch reads ISKLYGSGGPPPTGEEDTSEKDEL. Thr-643 and Thr-648 each carry phosphothreonine. Over residues 644–654 the composition is skewed to acidic residues; sequence GEEDTSEKDEL. At Ser-649 the chain carries Phosphoserine. Positions 651–654 match the Prevents secretion from ER motif; sequence KDEL.

The protein belongs to the heat shock protein 70 family. As to quaternary structure, monomer and homooligomer; homooligomerization via the interdomain linker inactivates the chaperone activity and acts as a storage of HSPA5/BiP molecules. Interacts with DNAJC1 (via J domain). Component of an EIF2 complex at least composed of CELF1/CUGBP1, CALR, CALR3, EIF2S1, EIF2S2, HSP90B1 and HSPA5. Part of a large chaperone multiprotein complex comprising DNAJB11, HSP90B1, HSPA5, HYOU, PDIA2, PDIA4, PDIA6, PPIB, SDF2L1, UGGT1 and very small amounts of ERP29, but not, or at very low levels, CALR nor CANX. Interacts with TMEM132A and TRIM21. May form a complex with ERLEC1, OS9, SEL1L and SYVN1. Interacts with DNAJC10. Interacts with DNAJB9/ERdj4; leading to recruit HSPA5/BiP to ERN1/IRE1. Interacts with ERN1/IRE1 (via luminal domain); the interaction takes place following interaction with DNAJB9/ERdj4 and leads to inactivate ERN1/IRE1, the interaction also competitively inhibits ERN1 interaction with MANF. Interacts directly with MANF (via SAP domain); the interaction inhibits ATP binding to HSPA5/BiP and subsequent nucleotide exchange. Interacts with EIF2AK3/PERK (via luminal domain); interaction leads to inactivate EIF2AK3/PERK. Interacts with MX1. Interacts with METTL23. Interacts with CEMIP; the interaction induces calcium leakage from the endoplasmic reticulum and cell migration. Interacts with PCSK4 form; the interaction takes place in the endoplasmic reticulum. Interacts with CIPC. Interacts with CCDC88B (via C-terminus); the interaction opposes ERN1-mediated JNK activation, protecting against apoptosis. Interacts with INPP5K; necessary for INPP5K localization at the endoplasmic reticulum. Interacts with MANF; the interaction is direct. Interacts with LOXL2; leading to activate the ERN1/IRE1-XBP1 pathway of the unfolded protein response. Interacts with CLU under stressed condition; interaction increases CLU protein stability; facilitates its retrotranslocation and redistribution to the mitochondria; cooperatively suppress stress-induced apoptosis by stabilizing mitochondrial membrane integrity. Interacts with CCDC47. Interacts with CLN3. Interacts with ELAPOR1; may regulate the function of HSPA5 in apoptosis and cell proliferation. Interacts with CASP7. Interacts with ILDR2; the interaction stabilizes ILDR2 expression. Interacts with ADAM7. In unstressed cells, AMPylation at Thr-518 by FICD inactivates the chaperome activity: AMPylated form is locked in a relatively inert state and only weakly stimulated by J domain-containing proteins. In response to endoplasmic reticulum stress, de-AMPylation by the same protein, FICD, restores the chaperone activity.

The protein localises to the endoplasmic reticulum lumen. The protein resides in the melanosome. It is found in the cytoplasm. It localises to the cell surface. It catalyses the reaction ATP + H2O = ADP + phosphate + H(+). With respect to regulation, the chaperone activity is regulated by ATP-induced allosteric coupling of the nucleotide-binding (NBD) and substrate-binding (SBD) domains. In the ADP-bound and nucleotide-free (apo) states, the two domains have little interaction. In contrast, in the ATP-bound state the two domains are tightly coupled, which results in drastically accelerated kinetics in both binding and release of polypeptide substrates. J domain-containing co-chaperones (DNAJB9/ERdj4 or DNAJC10/ERdj5) stimulate the ATPase activity and are required for efficient substrate recognition by HSPA5/BiP. Homooligomerization inactivates participating HSPA5/BiP protomers and probably act as reservoirs to store HSPA5/BiP molecules when they are not needed by the cell. In terms of biological role, endoplasmic reticulum chaperone that plays a key role in protein folding and quality control in the endoplasmic reticulum lumen. Involved in the correct folding of proteins and degradation of misfolded proteins via its interaction with DNAJC10/ERdj5, probably to facilitate the release of DNAJC10/ERdj5 from its substrate. Acts as a key repressor of the EIF2AK3/PERK and ERN1/IRE1-mediated unfolded protein response (UPR). In the unstressed endoplasmic reticulum, recruited by DNAJB9/ERdj4 to the luminal region of ERN1/IRE1, leading to disrupt the dimerization of ERN1/IRE1, thereby inactivating ERN1/IRE1. Also binds and inactivates EIF2AK3/PERK in unstressed cells. Accumulation of misfolded protein in the endoplasmic reticulum causes release of HSPA5/BiP from ERN1/IRE1 and EIF2AK3/PERK, allowing their homodimerization and subsequent activation. Plays an auxiliary role in post-translational transport of small presecretory proteins across endoplasmic reticulum (ER). May function as an allosteric modulator for SEC61 channel-forming translocon complex, likely cooperating with SEC62 to enable the productive insertion of these precursors into SEC61 channel. Appears to specifically regulate translocation of precursors having inhibitory residues in their mature region that weaken channel gating. May also play a role in apoptosis and cell proliferation. The sequence is that of Endoplasmic reticulum chaperone BiP from Rattus norvegicus (Rat).